A 368-amino-acid polypeptide reads, in one-letter code: Endophilin-A2 (368 aa).

Positions M1–V21 are membrane-binding amphipathic helix. One can recognise a BAR domain in the interval S18 to S249. Positions P60–P87 are required for dimerization upon membrane association. A coiled-coil region spans residues D180–R250. The segment at L218–E254 is interaction with ARC. The tract at residues R243 to P309 is disordered. Positions R245–E261 are enriched in basic and acidic residues. Position 288 is a phosphoserine (S288). T298 is modified (phosphothreonine). The 60-residue stretch at L306–P365 folds into the SH3 domain. A Phosphotyrosine modification is found at Y315.

It belongs to the endophilin family. In terms of assembly, interacts with ARC, SYNJ1 and DNM1. Interacts with PDCD6IP. Interacts with BIN2. Detected in brain and testis (at protein level). Ubiquitous.

It is found in the cytoplasm. Its subcellular location is the early endosome membrane. The protein resides in the cell projection. It localises to the podosome. In terms of biological role, implicated in endocytosis. May recruit other proteins to membranes with high curvature. In Rattus norvegicus (Rat), this protein is Endophilin-A2 (Sh3gl1).